A 689-amino-acid chain; its full sequence is Glycine--tRNA ligase beta subunit (689 aa).

This sequence belongs to the class-II aminoacyl-tRNA synthetase family. Tetramer of two alpha and two beta subunits.

Its subcellular location is the cytoplasm. The catalysed reaction is tRNA(Gly) + glycine + ATP = glycyl-tRNA(Gly) + AMP + diphosphate. The protein is Glycine--tRNA ligase beta subunit of Escherichia coli O17:K52:H18 (strain UMN026 / ExPEC).